Consider the following 349-residue polypeptide: Small ribosomal subunit biogenesis GTPase RsgA (349 aa).

Basic residues predominate over residues 1–11; the sequence is MSKKKLSKGQQ. Residues 1–35 are disordered; that stretch reads MSKKKLSKGQQRRVSANHQRRLKHADSKVEWDDSQ. A CP-type G domain is found at 111-272; the sequence is YDGLKPIAAN…VIDSPGVREF (162 aa). Residues 158–161 and 212–220 each bind GTP; these read NKID and GQSGVGKSS. Positions 296, 301, 303, and 309 each coordinate Zn(2+).

Belongs to the TRAFAC class YlqF/YawG GTPase family. RsgA subfamily. Monomer. Associates with 30S ribosomal subunit, binds 16S rRNA. Zn(2+) is required as a cofactor.

Its subcellular location is the cytoplasm. In terms of biological role, one of several proteins that assist in the late maturation steps of the functional core of the 30S ribosomal subunit. Helps release RbfA from mature subunits. May play a role in the assembly of ribosomal proteins into the subunit. Circularly permuted GTPase that catalyzes slow GTP hydrolysis, GTPase activity is stimulated by the 30S ribosomal subunit. In Dickeya dadantii (strain 3937) (Erwinia chrysanthemi (strain 3937)), this protein is Small ribosomal subunit biogenesis GTPase RsgA.